Consider the following 479-residue polypeptide: Anaerobic nitric oxide reductase flavorubredoxin (479 aa).

A zinc metallo-hydrolase region spans residues 30 to 210; sequence LRGSSYNSYL…PFSRLVTPKI (181 aa). 6 residues coordinate Fe cation: histidine 79, glutamate 81, aspartate 83, histidine 147, aspartate 166, and histidine 227. The 140-residue stretch at 254-393 folds into the Flavodoxin-like domain; it reads ITIFYDTMSN…LCRQHGRDIA (140 aa). FMN contacts are provided by residues 260–264 and 342–369; these read TMSNN and AFGSHGWSGGAVDRLSTRLQDAGFEMSL. Residues 423 to 474 enclose the Rubredoxin-like domain; the sequence is GPKMQCSVCQWIYDPALGEPLQDVAPGTPWSDVPDNFLCPECSLGKDVFDVL. Residues cysteine 428, cysteine 431, cysteine 461, and cysteine 464 each contribute to the Fe cation site.

It in the N-terminal section; belongs to the zinc metallo-hydrolase group 3 family. Homotetramer. Fe cation is required as a cofactor. It depends on FMN as a cofactor.

The protein localises to the cytoplasm. It functions in the pathway nitrogen metabolism; nitric oxide reduction. Its function is as follows. Anaerobic nitric oxide reductase; uses NADH to detoxify nitric oxide (NO), protecting several 4Fe-4S NO-sensitive enzymes. Has at least 2 reductase partners, only one of which (NorW, flavorubredoxin reductase) has been identified. NO probably binds to the di-iron center; electrons enter from the NorW at rubredoxin and are transferred sequentially to the FMN center and the di-iron center. Also able to function as an aerobic oxygen reductase. This is Anaerobic nitric oxide reductase flavorubredoxin from Salmonella paratyphi B (strain ATCC BAA-1250 / SPB7).